Reading from the N-terminus, the 216-residue chain is 3-isopropylmalate dehydratase small subunit (216 aa).

Belongs to the LeuD family. LeuD type 1 subfamily. As to quaternary structure, heterodimer of LeuC and LeuD.

The catalysed reaction is (2R,3S)-3-isopropylmalate = (2S)-2-isopropylmalate. It functions in the pathway amino-acid biosynthesis; L-leucine biosynthesis; L-leucine from 3-methyl-2-oxobutanoate: step 2/4. Functionally, catalyzes the isomerization between 2-isopropylmalate and 3-isopropylmalate, via the formation of 2-isopropylmaleate. The polypeptide is 3-isopropylmalate dehydratase small subunit (Polaromonas sp. (strain JS666 / ATCC BAA-500)).